The primary structure comprises 77 residues: Translation initiation factor IF-1, chloroplastic (77 aa).

In terms of domain architecture, S1-like spans 1-71; that stretch reads MKEQKWIHEG…TRGRIIYRLR (71 aa).

Belongs to the IF-1 family. Component of the 30S ribosomal translation pre-initiation complex which assembles on the 30S ribosome in the order IF-2 and IF-3, IF-1 and N-formylmethionyl-tRNA(fMet); mRNA recruitment can occur at any time during PIC assembly.

It localises to the plastid. The protein resides in the chloroplast. In terms of biological role, one of the essential components for the initiation of protein synthesis. Stabilizes the binding of IF-2 and IF-3 on the 30S subunit to which N-formylmethionyl-tRNA(fMet) subsequently binds. Helps modulate mRNA selection, yielding the 30S pre-initiation complex (PIC). Upon addition of the 50S ribosomal subunit IF-1, IF-2 and IF-3 are released leaving the mature 70S translation initiation complex. This is Translation initiation factor IF-1, chloroplastic from Spinacia oleracea (Spinach).